The sequence spans 123 residues: Small ribosomal subunit protein uS12 (123 aa).

3-methylthioaspartic acid is present on D89.

It belongs to the universal ribosomal protein uS12 family. In terms of assembly, part of the 30S ribosomal subunit. Contacts proteins S8 and S17. May interact with IF1 in the 30S initiation complex.

With S4 and S5 plays an important role in translational accuracy. In terms of biological role, interacts with and stabilizes bases of the 16S rRNA that are involved in tRNA selection in the A site and with the mRNA backbone. Located at the interface of the 30S and 50S subunits, it traverses the body of the 30S subunit contacting proteins on the other side and probably holding the rRNA structure together. The combined cluster of proteins S8, S12 and S17 appears to hold together the shoulder and platform of the 30S subunit. This is Small ribosomal subunit protein uS12 from Geotalea uraniireducens (strain Rf4) (Geobacter uraniireducens).